A 387-amino-acid chain; its full sequence is Phosphoglycerate kinase (387 aa).

Substrate is bound by residues 21 to 23 (DLN), Arg-36, 59 to 62 (HLGR), Arg-113, and Arg-146. ATP is bound by residues Lys-197, Glu-314, and 340-343 (GGDT).

The protein belongs to the phosphoglycerate kinase family. As to quaternary structure, monomer.

It is found in the cytoplasm. It carries out the reaction (2R)-3-phosphoglycerate + ATP = (2R)-3-phospho-glyceroyl phosphate + ADP. Its pathway is carbohydrate degradation; glycolysis; pyruvate from D-glyceraldehyde 3-phosphate: step 2/5. This chain is Phosphoglycerate kinase, found in Salmonella schwarzengrund (strain CVM19633).